The chain runs to 256 residues: Hemin import ATP-binding protein HmuV (256 aa).

The ABC transporter domain occupies Ile2 to Asp238. Gly34–Ser41 is an ATP binding site.

The protein belongs to the ABC transporter superfamily. Heme (hemin) importer (TC 3.A.1.14.5) family. In terms of assembly, the complex is composed of two ATP-binding proteins (HmuV), two transmembrane proteins (HmuU) and a solute-binding protein (HmuT).

Its subcellular location is the cell inner membrane. Part of the ABC transporter complex HmuTUV involved in hemin import. Responsible for energy coupling to the transport system. The polypeptide is Hemin import ATP-binding protein HmuV (Escherichia coli O157:H7).